We begin with the raw amino-acid sequence, 1366 residues long: Protein strawberry notch homolog 2 (1366 aa).

4 disordered regions span residues 1–24 (MLAVGPAMDRDYPQHEPPPAGSLL), 174–217 (QEQS…KQHP), 614–640 (STKRKRDRGAGSKRKRRPRGRGAKAPR), and 1324–1366 (HAGP…QAPL). Positions 15 to 24 (HEPPPAGSLL) are enriched in pro residues. Acidic residues predominate over residues 182-194 (PEEEDEAEEEEAE). Over residues 614–637 (STKRKRDRGAGSKRKRRPRGRGAK) the composition is skewed to basic residues. Residues 1333–1347 (LGEGAGAGGAAGGGP) are compositionally biased toward gly residues.

It belongs to the SBNO family. In terms of assembly, interacts with TAL1; this interaction inhibits TAL1 occupancy of the DCSTAMP promoter, leading to the activation of the DCSTAMP promoter by the transcription factor MITF. As to expression, detected in macrophages. IL10 regulates expression in a STAT3-dependent way.

Its function is as follows. Acts as a transcriptional coregulator, that can have both coactivator and corepressor functions. Inhibits the DCSTAMP-repressive activity of TAL1, hence enhancing the access of the transcription factor MITF to the DC-STAMP promoter in osteoclast. Plays a role in bone homeostasis; required as a positive regulator in TNFSF11//RANKL-mediated osteoclast fusion via a DCSTAMP-dependent pathway. May also be required in the regulation of osteoblast differentiation. Involved in the transcriptional corepression of NF-kappaB in macrophages. Plays a role as a regulator in the pro-inflammatory cascade. This is Protein strawberry notch homolog 2 (SBNO2) from Homo sapiens (Human).